An 878-amino-acid chain; its full sequence is Alanine--tRNA ligase (878 aa).

H562, H566, C670, and H674 together coordinate Zn(2+).

This sequence belongs to the class-II aminoacyl-tRNA synthetase family. Requires Zn(2+) as cofactor.

It localises to the cytoplasm. It catalyses the reaction tRNA(Ala) + L-alanine + ATP = L-alanyl-tRNA(Ala) + AMP + diphosphate. Catalyzes the attachment of alanine to tRNA(Ala) in a two-step reaction: alanine is first activated by ATP to form Ala-AMP and then transferred to the acceptor end of tRNA(Ala). Also edits incorrectly charged Ser-tRNA(Ala) and Gly-tRNA(Ala) via its editing domain. This chain is Alanine--tRNA ligase, found in Acinetobacter baumannii (strain ACICU).